Reading from the N-terminus, the 216-residue chain is ATP-dependent Clp protease proteolytic subunit (216 aa).

The Nucleophile role is filled by Ser-120. His-145 is an active-site residue.

It belongs to the peptidase S14 family. In terms of assembly, fourteen ClpP subunits assemble into 2 heptameric rings which stack back to back to give a disk-like structure with a central cavity, resembling the structure of eukaryotic proteasomes.

The protein resides in the cytoplasm. It carries out the reaction Hydrolysis of proteins to small peptides in the presence of ATP and magnesium. alpha-casein is the usual test substrate. In the absence of ATP, only oligopeptides shorter than five residues are hydrolyzed (such as succinyl-Leu-Tyr-|-NHMec, and Leu-Tyr-Leu-|-Tyr-Trp, in which cleavage of the -Tyr-|-Leu- and -Tyr-|-Trp bonds also occurs).. Functionally, cleaves peptides in various proteins in a process that requires ATP hydrolysis. Has a chymotrypsin-like activity. Plays a major role in the degradation of misfolded proteins. This chain is ATP-dependent Clp protease proteolytic subunit, found in Cupriavidus pinatubonensis (strain JMP 134 / LMG 1197) (Cupriavidus necator (strain JMP 134)).